Here is a 64-residue protein sequence, read N- to C-terminus: Cytochrome c oxidase subunit 5C-2 (64 aa).

A helical transmembrane segment spans residues 15 to 34 (SVVKELVIGTVLGLAAGGLW).

Belongs to the cytochrome c oxidase subunit 5C family.

Its subcellular location is the mitochondrion inner membrane. Functionally, this protein is one of the nuclear-coded polypeptide chains of cytochrome c oxidase, the terminal oxidase in mitochondrial electron transport. This is Cytochrome c oxidase subunit 5C-2 (COX5C2) from Helianthus annuus (Common sunflower).